Here is a 195-residue protein sequence, read N- to C-terminus: dTTP/UTP pyrophosphatase (195 aa).

Catalysis depends on D70, which acts as the Proton acceptor.

This sequence belongs to the Maf family. YhdE subfamily. Requires a divalent metal cation as cofactor.

The protein localises to the cytoplasm. It carries out the reaction dTTP + H2O = dTMP + diphosphate + H(+). It catalyses the reaction UTP + H2O = UMP + diphosphate + H(+). In terms of biological role, nucleoside triphosphate pyrophosphatase that hydrolyzes dTTP and UTP. May have a dual role in cell division arrest and in preventing the incorporation of modified nucleotides into cellular nucleic acids. The chain is dTTP/UTP pyrophosphatase from Photorhabdus laumondii subsp. laumondii (strain DSM 15139 / CIP 105565 / TT01) (Photorhabdus luminescens subsp. laumondii).